A 196-amino-acid chain; its full sequence is dITP/XTP pyrophosphatase (196 aa).

10 to 15 (TTNPHK) provides a ligand contact to substrate. Residue Asp68 is the Proton acceptor of the active site. Asp68 serves as a coordination point for Mg(2+). Substrate-binding positions include Ser69, 148–151 (FGYD), and 175–176 (HR).

The protein belongs to the HAM1 NTPase family. As to quaternary structure, homodimer. Requires Mg(2+) as cofactor.

It carries out the reaction XTP + H2O = XMP + diphosphate + H(+). It catalyses the reaction dITP + H2O = dIMP + diphosphate + H(+). The enzyme catalyses ITP + H2O = IMP + diphosphate + H(+). Its function is as follows. Pyrophosphatase that catalyzes the hydrolysis of nucleoside triphosphates to their monophosphate derivatives, with a high preference for the non-canonical purine nucleotides XTP (xanthosine triphosphate), dITP (deoxyinosine triphosphate) and ITP. Seems to function as a house-cleaning enzyme that removes non-canonical purine nucleotides from the nucleotide pool, thus preventing their incorporation into DNA/RNA and avoiding chromosomal lesions. The chain is dITP/XTP pyrophosphatase from Thermotoga maritima (strain ATCC 43589 / DSM 3109 / JCM 10099 / NBRC 100826 / MSB8).